A 298-amino-acid polypeptide reads, in one-letter code: 4-diphosphocytidyl-2-C-methyl-D-erythritol kinase (298 aa).

The active site involves K11. An ATP-binding site is contributed by 94–104 (PMGGGLGGGSS). The active site involves D136.

Belongs to the GHMP kinase family. IspE subfamily.

The enzyme catalyses 4-CDP-2-C-methyl-D-erythritol + ATP = 4-CDP-2-C-methyl-D-erythritol 2-phosphate + ADP + H(+). It functions in the pathway isoprenoid biosynthesis; isopentenyl diphosphate biosynthesis via DXP pathway; isopentenyl diphosphate from 1-deoxy-D-xylulose 5-phosphate: step 3/6. Functionally, catalyzes the phosphorylation of the position 2 hydroxy group of 4-diphosphocytidyl-2C-methyl-D-erythritol. The protein is 4-diphosphocytidyl-2-C-methyl-D-erythritol kinase of Chromohalobacter salexigens (strain ATCC BAA-138 / DSM 3043 / CIP 106854 / NCIMB 13768 / 1H11).